Here is a 1115-residue protein sequence, read N- to C-terminus: DNA-directed RNA polymerase subunit beta (1115 aa).

The disordered stretch occupies residues 1084–1115 (HEAGEGEDDEYFEEDEEAVDDEPMTFDDDDME). Over residues 1088-1115 (EGEDDEYFEEDEEAVDDEPMTFDDDDME) the composition is skewed to acidic residues.

Belongs to the RNA polymerase beta chain family. As to quaternary structure, the RNAP catalytic core consists of 2 alpha, 1 beta, 1 beta' and 1 omega subunit. When a sigma factor is associated with the core the holoenzyme is formed, which can initiate transcription.

The catalysed reaction is RNA(n) + a ribonucleoside 5'-triphosphate = RNA(n+1) + diphosphate. Its function is as follows. DNA-dependent RNA polymerase catalyzes the transcription of DNA into RNA using the four ribonucleoside triphosphates as substrates. The polypeptide is DNA-directed RNA polymerase subunit beta (Desulfitobacterium hafniense (strain DSM 10664 / DCB-2)).